We begin with the raw amino-acid sequence, 1273 residues long: MYLWLKLLAFSLALLGPEVFVTGQGTTDDGLDTTEIVLLPQTDPLPARTTEFTPPSISERGNGSSETTYLPGFSSTLMPHLTPQPDSQTPSARGADTQTLSSQADLTTLTAAPSGETDPPGVPEESTVPETFPGGTPILARNSTAPSPTHTSNVSTTDISSGANLTTPAPSTLGFASNTTTSTEIATPQTKPSCDEKFGNVTVRYIYDDSSKNFNANLEGDKKPKCEYTDCEKELKNLPECSQKNVTLSNGSCTPDKIINLDVPPGTHNFNLTNCTPDIEANTSICLEWKIKNKFTCDIQKISYNFRCTPEMKTFALDKHGTLWLHNLTVRTNYTCAAEVLYNNVILLKQDRRVQTDFGTPEMLPHVQCKNSTNSTTLVSWAEPASKHHGYILCYKKTPSEKCENLANDVNSFEVKNLRPYTEYTVSLFAYVIGRVQRNGPAKDCNFRTKAARPGKVNGMKTSRASDNSINVTCNSPYEINGPEARYILEVKSGGSLVKTFNQSTCKFVVDNLYYSTDYEFLVYFYNGEYLGDPEIKPQSTSYNSKALIIFLVFLIIVTSIALLVVLYKIYDLRKKRSSNLDEQQELVERDEEKQLINVDPIHSDLLLETYKRKIADEGRLFLAEFQSIPRVFSKFPIKDARKSQNQNKNRYVDILPYDYNRVELSEINGDAGSTYINASYIDGFKEPRKYIAAQGPRDETVDDFWKMIWEQKATVIVMVTRCEEGNRNKCAEYWPCMEEGTRTFRDVVVTINDHKRCPDYIIQKLSIAHKKEKATGREVTHIQFTSWPDHGVPEDPHLLLKLRRRVNAFSNFFSGPIVVHCSAGVGRTGTYIGIDAMLESLEAEGKVDVYGYVVNLRRQRCLMVQVEAQYILIHQALVEYNQFGETEVNLSELHSCLQNLKKRDPPSDPSPLEAEYQRLPSYRSWRTQHIGNQEENKKKNRSSNVVPYDFNRVPLKHELEMSKESEAESDESSDEDSDSEETSKYINASFVMSYWKPEMMIAAQGPLKETIGDFWQMIFQRKVKVIVMLTELMSGDQEVCAQYWGEGKQTYGDMEVMLKDTNKSSAYILRAFELRHSKRKEPRTVYQYQCTTWKGEELPAEPKDLVTLIQNIKQKLPKSGSEGMKYHKHASILVHCRDGSQQTGLFCALFNLLESAETEDVVDVFQVVKSLRKARPGMVGSFEQYQFLYDIMASIYPTQNGQVKKANSQDKIEFHNEVDGAKQDANCVQPADPLNKAQEDSKEVGASEPASGSEEPEHSANGPMSPALTPSS.

The first 23 residues, 1 to 23 (MYLWLKLLAFSLALLGPEVFVTG), serve as a signal peptide directing secretion. Residues 24-546 (QGTTDDGLDT…KPQSTSYNSK (523 aa)) lie on the Extracellular side of the membrane. Residues 45–192 (LPARTTEFTP…TEIATPQTKP (148 aa)) are disordered. Polar residues-rich tracts occupy residues 50 to 77 (TEFT…SSTL), 84 to 111 (QPDS…TLTA), and 141 to 192 (RNST…QTKP). N62 carries an N-linked (GlcNAc...) asparagine glycan. N142, N153, N164, N178, N200, N245, N250, N271, N282, N327, N333, N371, N374, N471, and N502 each carry an N-linked (GlcNAc...) asparagine glycan. Fibronectin type-III domains lie at 361–452 (PEML…TKAA) and 453–545 (RPGK…SYNS). A helical transmembrane segment spans residues 547-567 (ALIIFLVFLIIVTSIALLVVL). The Cytoplasmic portion of the chain corresponds to 568–1273 (YKIYDLRKKR…PMSPALTPSS (706 aa)). 2 consecutive Tyrosine-protein phosphatase domains span residues 622–881 (FLAE…LVEY) and 913–1196 (LEAE…MASI). Y652 bears the Phosphotyrosine mark. Substrate contacts are provided by residues D790, 822–828 (CSAGVGR), and Q866. C822 functions as the Phosphocysteine intermediate in the catalytic mechanism. Phosphoserine is present on residues S944, S963, S966, S970, S973, S974, and S978. Residues 960-984 (LEMSKESEAESDESSDEDSDSEETS) are disordered. Positions 968-981 (AESDESSDEDSDSE) are enriched in acidic residues. The Phosphocysteine intermediate role is filled by C1137. 2 positions are modified to phosphoserine: S1209 and S1266. The tract at residues 1219-1273 (VDGAKQDANCVQPADPLNKAQEDSKEVGASEPASGSEEPEHSANGPMSPALTPSS) is disordered.

The protein belongs to the protein-tyrosine phosphatase family. Receptor class 1/6 subfamily. In terms of assembly, interacts with SKAP1. Interacts with DPP4; the interaction is enhanced in an interleukin-12-dependent manner in activated lymphocytes. Binds GANAB and PRKCSH. Interacts with CD53; this interaction stabilizes PTPRC on the membrane and is required for optimal phosphatase activity. Interacts with CLEC10A. Heavily N- and O-glycosylated. In terms of processing, the cytoplasmic domain contains potential phosphorylation sites. As to expression, isoform 1 and isoform 2 are found in thymocyte and lymph node. Isoform 4 and isoform 3 are found in the lymph nod.

It is found in the cell membrane. The protein localises to the membrane raft. The protein resides in the synapse. It carries out the reaction O-phospho-L-tyrosyl-[protein] + H2O = L-tyrosyl-[protein] + phosphate. Protein tyrosine-protein phosphatase required for T-cell activation through the antigen receptor. Acts as a positive regulator of T-cell coactivation upon binding to DPP4. The first PTPase domain has enzymatic activity, while the second one seems to affect the substrate specificity of the first one. Upon T-cell activation, recruits and dephosphorylates SKAP1 and FYN. Dephosphorylates LYN, and thereby modulates LYN activity. Interacts with CLEC10A at antigen presenting cell-T cell contact; CLEC10A on immature dendritic cells recognizes Tn antigen-carrying PTPRC/CD45 receptor on effector T cells and modulates T cell activation threshold to limit autoreactivity. The sequence is that of Receptor-type tyrosine-protein phosphatase C (Ptprc) from Rattus norvegicus (Rat).